We begin with the raw amino-acid sequence, 90 residues long: Guanine nucleotide-binding protein subunit gamma (90 aa).

Cysteine 86 is lipidated: S-palmitoyl cysteine. Cysteine 87 carries the cysteine methyl ester modification. A lipid anchor (S-farnesyl cysteine) is attached at cysteine 87. Residues 88–90 constitute a propeptide, removed in mature form; it reads CIM.

It belongs to the G protein gamma family. G proteins are composed of 3 units, alpha, beta and gamma.

The protein localises to the membrane. The polypeptide is Guanine nucleotide-binding protein subunit gamma (Eremothecium gossypii (strain ATCC 10895 / CBS 109.51 / FGSC 9923 / NRRL Y-1056) (Yeast)).